The sequence spans 651 residues: Carboxypeptidase S1 homolog A (651 aa).

A signal peptide spans 1 to 19; sequence MHLATGLAVALPFIGAASA. The cysteines at positions 50 and 121 are disulfide-linked. Residues asparagine 77, asparagine 125, asparagine 128, asparagine 161, asparagine 184, and asparagine 202 are each glycosylated (N-linked (GlcNAc...) asparagine). Residue serine 238 is part of the active site. Asparagine 260, asparagine 299, asparagine 308, asparagine 347, and asparagine 410 each carry an N-linked (GlcNAc...) asparagine glycan. Intrachain disulfides connect cysteine 325–cysteine 361 and cysteine 332–cysteine 354. Aspartate 458 is a catalytic residue. Cysteine 461 provides a ligand contact to substrate. N-linked (GlcNAc...) asparagine glycans are attached at residues asparagine 474 and asparagine 504. Histidine 515 is an active-site residue. Glutamate 516 contacts substrate. Residues 604–630 are disordered; the sequence is KSPAGKKQGPPPTSTSPPSPTSSSEGS. The span at 612–623 shows a compositional bias: pro residues; sequence GPPPTSTSPPSP. Residue serine 625 is the site of GPI-anchor amidated serine attachment. Residues 626–651 constitute a propeptide, removed in mature form; the sequence is SSEGSVKEFSVSVLGVSVLAAITFFL.

It belongs to the peptidase S10 family.

The protein resides in the cell membrane. It carries out the reaction Preferential release of a C-terminal arginine or lysine residue.. Extracellular serine carboxypeptidase that contributes to pathogenicity. This chain is Carboxypeptidase S1 homolog A (SCPA), found in Arthroderma otae (strain ATCC MYA-4605 / CBS 113480) (Microsporum canis).